Reading from the N-terminus, the 548-residue chain is Mercuric reductase (548 aa).

The HMA domain occupies 1–65 (MTEITVNGMT…AIAALGYQGS (65 aa)). Residues Cys11 and Cys14 each contribute to the a metal cation site. Residues Ala97, Gly117, and Thr122 each contribute to the FAD site. Cys123 and Cys128 are oxidised to a cystine. Residues Lys132, Ala198, Asp390, and Val398 each contribute to the FAD site. Positions 545 and 546 each coordinate Hg(2+).

The protein belongs to the class-I pyridine nucleotide-disulfide oxidoreductase family. Homodimer. Requires FAD as cofactor.

The catalysed reaction is Hg + NADP(+) + H(+) = Hg(2+) + NADPH. Resistance to Hg(2+) in bacteria appears to be governed by a specialized system which includes mercuric reductase. MerA protein is responsible for volatilizing mercury as Hg(0). This is Mercuric reductase (merA) from Pseudomonas fluorescens.